We begin with the raw amino-acid sequence, 204 residues long: VEL1-related protein AC977.05c (204 aa).

Residues 1-17 form the signal peptide; that stretch reads MIFKNLISLFFIGLATA.

It belongs to the VEL1 family.

It localises to the cytoplasm. It is found in the cytosol. The chain is VEL1-related protein AC977.05c from Schizosaccharomyces pombe (strain 972 / ATCC 24843) (Fission yeast).